Here is a 678-residue protein sequence, read N- to C-terminus: Vacuolar fusion protein mon1 (678 aa).

3 disordered regions span residues 1 to 116, 449 to 474, and 568 to 591; these read MDRD…YTSP, EENNSNNTNNPEQPPQPPPPKPVTSP, and FETSSPPLPSSSPSENGSSQKTTE. The span at 10–20 shows a compositional bias: low complexity; that stretch reads NDGTNDNNDTT. Residues 63–77 are compositionally biased toward polar residues; the sequence is RPTTQVSTIDISTLS. Positions 87 to 105 are enriched in low complexity; it reads STSATSATSATSATRSVAS. Positions 106 to 116 are enriched in polar residues; the sequence is PQSSASGYTSP. Residues 450–459 show a composition bias toward low complexity; sequence ENNSNNTNNP. Pro residues predominate over residues 460 to 471; that stretch reads EQPPQPPPPKPV.

It belongs to the MON1/SAND family.

Its subcellular location is the endosome. The protein resides in the multivesicular body membrane. It localises to the prevacuolar compartment membrane. The protein localises to the vacuole membrane. In terms of biological role, in complex with CCZ1, is required for multiple vacuole delivery pathways including the cytoplasm to vacuole transport (Cvt), autophagy, pexophagy and endocytosis. The MON1-CCZ1 complex acts at the fusion of vesicles with the vacuole, through its regulation of the SNARE complex during the coordinated priming and docking stages of fusion, and particularly at the stage of tethering/docking. This Neurospora crassa (strain ATCC 24698 / 74-OR23-1A / CBS 708.71 / DSM 1257 / FGSC 987) protein is Vacuolar fusion protein mon1 (apg-13).